The sequence spans 223 residues: Transcriptional regulatory protein PhoP (223 aa).

In terms of domain architecture, Response regulatory spans 2–116 (RVLVVEDNAL…EVMARMQALM (115 aa)). Residue D51 is modified to 4-aspartylphosphate. Positions 124 to 222 (SQVISLPPFQ…VRGQGYLFEL (99 aa)) form a DNA-binding region, ompR/PhoB-type.

In terms of assembly, monomer in the inactive, unphosphorylated state and dimer in the active, phosphorylated state. Phosphorylated by PhoQ.

It localises to the cytoplasm. With respect to regulation, feedback inhibited by MgrB, which seems to bind PhoQ, altering its activity and that of downstream effector PhoP. PhoP-regulated transcription is redox-sensitive, being activated when the periplasm becomes more reducing (deletion of dsbA/dsbB, or treatment with dithiothreitol). MgrB acts between DsbA/DsbB and PhoP/PhoQ in this pathway. Its function is as follows. Member of the two-component regulatory system PhoP/PhoQ involved in adaptation to low Mg(2+) environments and the control of acid resistance genes. In low periplasmic Mg(2+), PhoQ phosphorylates PhoP, resulting in the expression of PhoP-activated genes (PAG) and repression of PhoP-repressed genes (PRG). In high periplasmic Mg(2+), PhoQ dephosphorylates phospho-PhoP, resulting in the repression of PAG and may lead to expression of some PRG. Mediates magnesium influx to the cytosol by activation of MgtA. Promotes expression of the two-component regulatory system rstA/rstB and transcription of the hemL, mgrB, nagA, slyB, vboR and yrbL genes. The chain is Transcriptional regulatory protein PhoP (phoP) from Escherichia coli (strain K12).